The sequence spans 1414 residues: DNA-directed RNA polymerase subunit beta' (1414 aa).

Zn(2+) contacts are provided by Cys-70, Cys-72, Cys-85, and Cys-88. Residues Asp-461, Asp-463, and Asp-465 each coordinate Mg(2+). 4 residues coordinate Zn(2+): Cys-820, Cys-894, Cys-901, and Cys-904.

The protein belongs to the RNA polymerase beta' chain family. In terms of assembly, the RNAP catalytic core consists of 2 alpha, 1 beta, 1 beta' and 1 omega subunit. When a sigma factor is associated with the core the holoenzyme is formed, which can initiate transcription. Mg(2+) serves as cofactor. Requires Zn(2+) as cofactor.

The catalysed reaction is RNA(n) + a ribonucleoside 5'-triphosphate = RNA(n+1) + diphosphate. In terms of biological role, DNA-dependent RNA polymerase catalyzes the transcription of DNA into RNA using the four ribonucleoside triphosphates as substrates. In Cupriavidus taiwanensis (strain DSM 17343 / BCRC 17206 / CCUG 44338 / CIP 107171 / LMG 19424 / R1) (Ralstonia taiwanensis (strain LMG 19424)), this protein is DNA-directed RNA polymerase subunit beta'.